The primary structure comprises 324 residues: Succinylglutamate desuccinylase (324 aa).

Zn(2+) is bound by residues H53, E56, and H148. E211 is an active-site residue.

It belongs to the AspA/AstE family. Succinylglutamate desuccinylase subfamily. Zn(2+) is required as a cofactor.

The catalysed reaction is N-succinyl-L-glutamate + H2O = L-glutamate + succinate. It participates in amino-acid degradation; L-arginine degradation via AST pathway; L-glutamate and succinate from L-arginine: step 5/5. Functionally, transforms N(2)-succinylglutamate into succinate and glutamate. This Acinetobacter baumannii (strain AB0057) protein is Succinylglutamate desuccinylase.